The sequence spans 481 residues: tRNA:m(4)X modification enzyme TRM13 homolog (481 aa).

Residue A2 is modified to N-acetylalanine. Residues 56-83 (RILCPLDPKHTVYEDQLAKHLKKCNSRE) form a CHHC U11-48K-type zinc finger. Zn(2+) contacts are provided by C59, H65, H75, and C79. Positions 113-140 (SLSEEQLEKLIKKLRKASEGLNSTLKDH) form a coiled coil. Positions 381-408 (ETSNSTTKRQDNQNDDSEEHDDGGYRIT) are disordered.

Belongs to the methyltransferase TRM13 family.

The enzyme catalyses cytidine(4) in tRNA(Pro) + S-adenosyl-L-methionine = 2'-O-methylcytidine(4) in tRNA(Pro) + S-adenosyl-L-homocysteine + H(+). The catalysed reaction is cytidine(4) in tRNA(Gly)(GCC) + S-adenosyl-L-methionine = 2'-O-methylcytidine(4) in tRNA(Gly)(GCC) + S-adenosyl-L-homocysteine + H(+). It carries out the reaction adenosine(4) in tRNA(His) + S-adenosyl-L-methionine = 2'-O-methyladenosine(4) in tRNA(His) + S-adenosyl-L-homocysteine + H(+). Functionally, tRNA methylase which 2'-O-methylates cytidine(4) in tRNA(Pro) and tRNA(Gly)(GCC), and adenosine(4) in tRNA(His). In Homo sapiens (Human), this protein is tRNA:m(4)X modification enzyme TRM13 homolog (TRMT13).